Consider the following 100-residue polypeptide: Small ribosomal subunit protein uS14 (100 aa).

This sequence belongs to the universal ribosomal protein uS14 family. As to quaternary structure, part of the 30S ribosomal subunit. Contacts proteins S3 and S10.

Functionally, binds 16S rRNA, required for the assembly of 30S particles and may also be responsible for determining the conformation of the 16S rRNA at the A site. The polypeptide is Small ribosomal subunit protein uS14 (Synechocystis sp. (strain ATCC 27184 / PCC 6803 / Kazusa)).